The sequence spans 906 residues: MKFHILLLLLVGACLPVFTQEIKPKPELLPADEAPKDPEAVFSEGEPFELTDALDTPKNGSVPVPEPEPKPEPEPEPEPKPEPEPSPTPEPEPAIKFDNIESEDYGDVAETAASTQPDELNTEVIEQLVDTFLNTGSIASNKTNKGPVFANPVAQALVNSSNYWKTDNLQAPGSIKDEEKLRSWLAGYEAEAIKVLREVALSGWRYFNDASPSLKLALDEAENVLTMFVRSTSMQAKQFDMASVTDEKVMRQLGYVSFEGMSALAPSRFADYSQAQAALNRDSKDSTICDKDVPPPCALQKIDMDSIFRNEKDASRLQHLWVSYVTAIAKSKPSYNNIITISNEGAKLNGFANGGAMWRSAFDMSSKVHKAEFDLNKQIDKIYSTIQPFYQLLHAYMRRQLAGIYSNPVGLSKDGPIPAHLFGSLDGGDWSAHYEQTKPFEEESETPEAMLSAFNTQNYTTKKMFVTAYRYFKSAGFPHLPKSYWTSSIFARVWSKDMICHPAAALDMRAPNDFRVKACAQLGEPDFEQAHSLLVQTYYQYLYKDQSLLFREQASPVITDAIANAFAHLSTNPHYLYSQKLVPSEHLDIKDSVIINKLYKESLESFTKLPFTIAADNWRYELFDGTVPKNKLNDRWWEIRNKYEGVRSPQPYNTSNLDALIHNSVSQVHSPATRTLISYVLKFQILKALCPEGTILSEGCILSEDTTEKLRETMKLGSSITWLKALEMISGKGELDAQPLLEYYEPLINWLRNTNEIDQVVVGWDGEGTPFTVEEIPKTRQPGDGGNGLPSEDRVAFPGGECVNGQECLLDSHCNGTICVCNDGLYTLEIGNTFNCVPGNPADSGFGDGKGGLVIGLFNNEVTTPEPSAEPEPTAKTTTKMPPRVRAATSPFSLYLTVLLIIYFAL.

Positions 1-19 (MKFHILLLLLVGACLPVFT) are cleaved as a signal peptide. Residues 28–95 (LLPADEAPKD…SPTPEPEPAI (68 aa)) are disordered. Residues 67 to 83 (PEPKPEPEPEPEPKPEP) show a composition bias toward basic and acidic residues. N-linked (GlcNAc...) asparagine glycosylation is present at Asn159. A Peptidase M2 domain is found at 175-765 (IKDEEKLRSW…EIDQVVVGWD (591 aa)). Cys289 and Cys297 are oxidised to a cystine. Asn653 is a glycosylation site (N-linked (GlcNAc...) asparagine). The disordered stretch occupies residues 862–882 (VTTPEPSAEPEPTAKTTTKMP). A compositionally biased stretch (low complexity) spans 863-882 (TTPEPSAEPEPTAKTTTKMP).

It belongs to the peptidase M2 family. In terms of tissue distribution, expressed in the hypodermis, in the vulva during organogenesis, and in the ray papillae of the male tail.

Functionally, inactive as a metallopeptidase, due to a lack of active site residues. Required for larval molting, male tail development, and formation of adult alae. Acts in the heterochronic pathway and plays a role in the developmental timing of postembryonic hypodermal seam cell division and adult alae production. Acts synergistically with apl-1 in let-7 regulated postembryonic cell division events. Might act downstream of the heterochronic protein lin-41. Negative regulator of lifespan, heat and oxidative stress response and age-related degenerative changes like reduced pharyngeal pumping and decreased body movements. Lifespan restriction is dependent on the forkhead-type transcription factor daf-16. The protein is Inactive angiotensin-converting enzyme-related protein of Caenorhabditis elegans.